The primary structure comprises 301 residues: Cilia- and flagella-associated protein 161 (301 aa).

It is found in the cytoplasm. The protein localises to the cytoskeleton. It localises to the cilium axoneme. Its function is as follows. Microtubule inner protein (MIP) part of the dynein-decorated doublet microtubules (DMTs) in cilia axoneme, which is required for motile cilia beating. In Danio rerio (Zebrafish), this protein is Cilia- and flagella-associated protein 161.